The primary structure comprises 347 residues: Glycerol-3-phosphate dehydrogenase [NAD(P)+] (347 aa).

3 residues coordinate NADPH: Trp-20, Arg-39, and Lys-118. Positions 118, 152, and 154 each coordinate sn-glycerol 3-phosphate. Ala-156 provides a ligand contact to NADPH. 5 residues coordinate sn-glycerol 3-phosphate: Lys-207, Asp-260, Ser-270, Arg-271, and Asn-272. Lys-207 serves as the catalytic Proton acceptor. Arg-271 provides a ligand contact to NADPH. Residues Val-295 and Glu-297 each contribute to the NADPH site.

This sequence belongs to the NAD-dependent glycerol-3-phosphate dehydrogenase family.

Its subcellular location is the cytoplasm. It catalyses the reaction sn-glycerol 3-phosphate + NAD(+) = dihydroxyacetone phosphate + NADH + H(+). The enzyme catalyses sn-glycerol 3-phosphate + NADP(+) = dihydroxyacetone phosphate + NADPH + H(+). The protein operates within membrane lipid metabolism; glycerophospholipid metabolism. Functionally, catalyzes the reduction of the glycolytic intermediate dihydroxyacetone phosphate (DHAP) to sn-glycerol 3-phosphate (G3P), the key precursor for phospholipid synthesis. This chain is Glycerol-3-phosphate dehydrogenase [NAD(P)+], found in Cupriavidus pinatubonensis (strain JMP 134 / LMG 1197) (Cupriavidus necator (strain JMP 134)).